A 277-amino-acid chain; its full sequence is Shikimate dehydrogenase (NADP(+)) (277 aa).

Residues 20 to 22 and Thr-67 contribute to the shikimate site; that span reads SLS. Catalysis depends on Lys-71, which acts as the Proton acceptor. NADP(+) is bound at residue Asp-83. Shikimate-binding residues include Asn-92 and Asp-107. NADP(+) is bound by residues 131-135 and Ile-219; that span reads GAGGV. Tyr-221 contributes to the shikimate binding site. Gly-242 provides a ligand contact to NADP(+).

Belongs to the shikimate dehydrogenase family. In terms of assembly, homodimer.

It carries out the reaction shikimate + NADP(+) = 3-dehydroshikimate + NADPH + H(+). Its pathway is metabolic intermediate biosynthesis; chorismate biosynthesis; chorismate from D-erythrose 4-phosphate and phosphoenolpyruvate: step 4/7. Functionally, involved in the biosynthesis of the chorismate, which leads to the biosynthesis of aromatic amino acids. Catalyzes the reversible NADPH linked reduction of 3-dehydroshikimate (DHSA) to yield shikimate (SA). The chain is Shikimate dehydrogenase (NADP(+)) from Pelobacter propionicus (strain DSM 2379 / NBRC 103807 / OttBd1).